We begin with the raw amino-acid sequence, 385 residues long: Mannitol-1-phosphate 5-dehydrogenase (385 aa).

3–14 serves as a coordination point for NAD(+); that stretch reads ALHFGAGNIGRG.

This sequence belongs to the mannitol dehydrogenase family.

It carries out the reaction D-mannitol 1-phosphate + NAD(+) = beta-D-fructose 6-phosphate + NADH + H(+). The chain is Mannitol-1-phosphate 5-dehydrogenase from Pasteurella multocida (strain Pm70).